The chain runs to 214 residues: Nicotinamidase (214 aa).

Catalysis depends on Asp18, which acts as the Proton acceptor. The a divalent metal cation site is built by Asp56, His58, His62, and His91. Lys116 is an active-site residue. The Nucleophile role is filled by Cys161.

It belongs to the isochorismatase family. A divalent metal cation serves as cofactor.

It catalyses the reaction nicotinamide + H2O = nicotinate + NH4(+). It participates in cofactor biosynthesis; nicotinate biosynthesis; nicotinate from nicotinamide: step 1/1. Functionally, catalyzes the deamidation of nicotinamide (NAM) into nicotinate (Na). Functions in the deamidating salvage pathway for production of NAD from nicotinamide. This chain is Nicotinamidase, found in Acinetobacter baylyi (strain ATCC 33305 / BD413 / ADP1).